A 156-amino-acid polypeptide reads, in one-letter code: Large ribosomal subunit protein uL15 (156 aa).

A compositionally biased stretch (basic and acidic residues) spans 1 to 11 (MKLNDLRDKPG). The tract at residues 1–40 (MKLNDLRDKPGSVKARKRVGRGIGSGTGKTGGRGVKGQKS) is disordered. Positions 21-35 (RGIGSGTGKTGGRGV) are enriched in gly residues.

This sequence belongs to the universal ribosomal protein uL15 family. Part of the 50S ribosomal subunit.

In terms of biological role, binds to the 23S rRNA. The chain is Large ribosomal subunit protein uL15 from Brucella anthropi (strain ATCC 49188 / DSM 6882 / CCUG 24695 / JCM 21032 / LMG 3331 / NBRC 15819 / NCTC 12168 / Alc 37) (Ochrobactrum anthropi).